Consider the following 119-residue polypeptide: Autophagy-related protein 8C-like (119 aa).

A lipid anchor (Phosphatidylethanolamine amidated glycine) is attached at Gly-117. Positions 118–119 (SF) are cleaved as a propeptide — removed in mature form.

The protein belongs to the ATG8 family. As to quaternary structure, interacts with ATG4. Interacts with the Phytophtora infestans effector PexRD54. Interacts with JOKA2. In terms of processing, the C-terminal 2 residues are removed by ATG4 to expose Gly-117 at the C-terminus. The C-terminal Gly is then amidated with phosphatidylethanolamine by an activating system similar to that for ubiquitin. The phosphatidylethanolamine amidated glycine is required for autophagosome formation.

It localises to the cytoplasmic vesicle. Its subcellular location is the autophagosome membrane. It is found in the vacuole membrane. The protein resides in the cytoplasm. The protein localises to the cytoskeleton. Functionally, ubiquitin-like modifier involved in autophagosomes formation. May mediate the delivery of the autophagosomes to the vacuole via the microtubule cytoskeleton. ATG8CL-mediated selective autophagy contributes to defense against the fungal pathogen Phytophtora infestans. This Solanum tuberosum (Potato) protein is Autophagy-related protein 8C-like.